We begin with the raw amino-acid sequence, 105 residues long: Large ribosomal subunit protein uL24 (105 aa).

Belongs to the universal ribosomal protein uL24 family. As to quaternary structure, part of the 50S ribosomal subunit.

One of two assembly initiator proteins, it binds directly to the 5'-end of the 23S rRNA, where it nucleates assembly of the 50S subunit. Its function is as follows. One of the proteins that surrounds the polypeptide exit tunnel on the outside of the subunit. The polypeptide is Large ribosomal subunit protein uL24 (Marinomonas sp. (strain MWYL1)).